The primary structure comprises 296 residues: 4-hydroxybenzoate octaprenyltransferase (296 aa).

8 helical membrane-spanning segments follow: residues 28-48 (IGTL…SDGI), 51-71 (LAVL…GCVI), 102-122 (LLLT…LNHL), 143-163 (FFPI…PMAF), 174-194 (AWIL…VYAM), 212-232 (FGRY…LLMA), 233-253 (VLGA…IVLL), and 274-294 (FLAN…HTFF).

It belongs to the UbiA prenyltransferase family. Requires Mg(2+) as cofactor.

Its subcellular location is the cell inner membrane. The catalysed reaction is all-trans-octaprenyl diphosphate + 4-hydroxybenzoate = 4-hydroxy-3-(all-trans-octaprenyl)benzoate + diphosphate. The protein operates within cofactor biosynthesis; ubiquinone biosynthesis. Its function is as follows. Catalyzes the prenylation of para-hydroxybenzoate (PHB) with an all-trans polyprenyl group. Mediates the second step in the final reaction sequence of ubiquinone-8 (UQ-8) biosynthesis, which is the condensation of the polyisoprenoid side chain with PHB, generating the first membrane-bound Q intermediate 3-octaprenyl-4-hydroxybenzoate. This Neisseria meningitidis serogroup C (strain 053442) protein is 4-hydroxybenzoate octaprenyltransferase.